The primary structure comprises 107 residues: Phosphoribosyl-ATP pyrophosphatase (107 aa).

Belongs to the PRA-PH family.

The protein resides in the cytoplasm. The enzyme catalyses 1-(5-phospho-beta-D-ribosyl)-ATP + H2O = 1-(5-phospho-beta-D-ribosyl)-5'-AMP + diphosphate + H(+). It functions in the pathway amino-acid biosynthesis; L-histidine biosynthesis; L-histidine from 5-phospho-alpha-D-ribose 1-diphosphate: step 2/9. The polypeptide is Phosphoribosyl-ATP pyrophosphatase (hisE) (Neisseria meningitidis serogroup A / serotype 4A (strain DSM 15465 / Z2491)).